Reading from the N-terminus, the 390-residue chain is MQQITILGSTGSVGVSTLDVIARHPDRYSVYALTAQSKVEELAQQCARFKPQVAVVGSAEAAKKLQVLLDAQGLHTQVGYGEAALCAVASAPECDSVMAAIVGAAGLAPTLAAARSGKRVLLANKEALVMSGPLLMEAVAASGAILMPIDSEHNAIFQCMPATCQRTPLAHGVEKILLTASGGPFLKRDVNTLDQVSWQEAVAHPKWVMGRKISVDSATMMNKGLEVIEAHWLFDLPAERIEVVIHPQSVVHSMVSYVDGSVLAQLGNPDMRTPIAHALAYPERISSGVPPIDLIQIAQLSFERPDFLRFPCLKLAYDALQAGGSAPAIMNAANEIAVQAFLDSRIGFRAIDQLIARVMDVMPSVAITDIESVFAQDRCARELANSFIPS.

NADPH contacts are provided by threonine 10, glycine 11, serine 12, valine 13, and asparagine 124. Position 125 (lysine 125) interacts with 1-deoxy-D-xylulose 5-phosphate. NADPH is bound at residue glutamate 126. Aspartate 150 provides a ligand contact to Mn(2+). Residues serine 151, glutamate 152, serine 181, and histidine 204 each coordinate 1-deoxy-D-xylulose 5-phosphate. Residue glutamate 152 coordinates Mn(2+). Glycine 210 is a binding site for NADPH. 4 residues coordinate 1-deoxy-D-xylulose 5-phosphate: serine 217, asparagine 222, lysine 223, and glutamate 226. Glutamate 226 contacts Mn(2+).

The protein belongs to the DXR family. Mg(2+) is required as a cofactor. The cofactor is Mn(2+).

The catalysed reaction is 2-C-methyl-D-erythritol 4-phosphate + NADP(+) = 1-deoxy-D-xylulose 5-phosphate + NADPH + H(+). Its pathway is isoprenoid biosynthesis; isopentenyl diphosphate biosynthesis via DXP pathway; isopentenyl diphosphate from 1-deoxy-D-xylulose 5-phosphate: step 1/6. Its function is as follows. Catalyzes the NADPH-dependent rearrangement and reduction of 1-deoxy-D-xylulose-5-phosphate (DXP) to 2-C-methyl-D-erythritol 4-phosphate (MEP). In Janthinobacterium sp. (strain Marseille) (Minibacterium massiliensis), this protein is 1-deoxy-D-xylulose 5-phosphate reductoisomerase.